We begin with the raw amino-acid sequence, 1207 residues long: DNA-directed RNA polymerase subunit beta' (1207 aa).

Residues cysteine 60, cysteine 62, cysteine 75, and cysteine 78 each coordinate Zn(2+). Mg(2+) contacts are provided by aspartate 450, aspartate 452, and aspartate 454. Zn(2+) contacts are provided by cysteine 819, cysteine 893, cysteine 900, and cysteine 903.

The protein belongs to the RNA polymerase beta' chain family. The RNAP catalytic core consists of 2 alpha, 1 beta, 1 beta' and 1 omega subunit. When a sigma factor is associated with the core the holoenzyme is formed, which can initiate transcription. The cofactor is Mg(2+). Requires Zn(2+) as cofactor.

The enzyme catalyses RNA(n) + a ribonucleoside 5'-triphosphate = RNA(n+1) + diphosphate. Functionally, DNA-dependent RNA polymerase catalyzes the transcription of DNA into RNA using the four ribonucleoside triphosphates as substrates. The protein is DNA-directed RNA polymerase subunit beta' of Streptococcus pyogenes serotype M3 (strain SSI-1).